A 955-amino-acid polypeptide reads, in one-letter code: Eukaryotic translation initiation factor 3 subunit A (955 aa).

A coiled-coil region spans residues 96–127 (LSLAEQRVTDAQAQADKIADEEEADDLEAEET). Residues 325–498 (YQRVASFVLL…RSVLFEEVRA (174 aa)) form the PCI domain. Coiled coils occupy residues 533–636 (AEAR…INAK) and 752–860 (KREA…KRAG). Positions 789–858 (RAEEEAKAAA…ELEAKLEAKR (70 aa)) are enriched in basic and acidic residues. A disordered region spans residues 789–955 (RAEEEAKAAA…GRYIPPSQRN (167 aa)).

The protein belongs to the eIF-3 subunit A family. As to quaternary structure, component of the eukaryotic translation initiation factor 3 (eIF-3) complex.

Its subcellular location is the cytoplasm. Its function is as follows. RNA-binding component of the eukaryotic translation initiation factor 3 (eIF-3) complex, which is involved in protein synthesis of a specialized repertoire of mRNAs and, together with other initiation factors, stimulates binding of mRNA and methionyl-tRNAi to the 40S ribosome. The eIF-3 complex specifically targets and initiates translation of a subset of mRNAs involved in cell proliferation. This is Eukaryotic translation initiation factor 3 subunit A from Yarrowia lipolytica (strain CLIB 122 / E 150) (Yeast).